A 245-amino-acid chain; its full sequence is 1-(5-phosphoribosyl)-5-[(5-phosphoribosylamino)methylideneamino] imidazole-4-carboxamide isomerase (245 aa).

Asp-7 acts as the Proton acceptor in catalysis. Asp-129 serves as the catalytic Proton donor.

Belongs to the HisA/HisF family.

It localises to the cytoplasm. The enzyme catalyses 1-(5-phospho-beta-D-ribosyl)-5-[(5-phospho-beta-D-ribosylamino)methylideneamino]imidazole-4-carboxamide = 5-[(5-phospho-1-deoxy-D-ribulos-1-ylimino)methylamino]-1-(5-phospho-beta-D-ribosyl)imidazole-4-carboxamide. Its pathway is amino-acid biosynthesis; L-histidine biosynthesis; L-histidine from 5-phospho-alpha-D-ribose 1-diphosphate: step 4/9. The polypeptide is 1-(5-phosphoribosyl)-5-[(5-phosphoribosylamino)methylideneamino] imidazole-4-carboxamide isomerase (Shewanella pealeana (strain ATCC 700345 / ANG-SQ1)).